The primary structure comprises 473 residues: ATP synthase subunit beta (473 aa).

153–160 provides a ligand contact to ATP; the sequence is GGAGVGKT.

It belongs to the ATPase alpha/beta chains family. F-type ATPases have 2 components, CF(1) - the catalytic core - and CF(0) - the membrane proton channel. CF(1) has five subunits: alpha(3), beta(3), gamma(1), delta(1), epsilon(1). CF(0) has three main subunits: a(1), b(2) and c(9-12). The alpha and beta chains form an alternating ring which encloses part of the gamma chain. CF(1) is attached to CF(0) by a central stalk formed by the gamma and epsilon chains, while a peripheral stalk is formed by the delta and b chains.

The protein localises to the cell inner membrane. It catalyses the reaction ATP + H2O + 4 H(+)(in) = ADP + phosphate + 5 H(+)(out). Its function is as follows. Produces ATP from ADP in the presence of a proton gradient across the membrane. The catalytic sites are hosted primarily by the beta subunits. This chain is ATP synthase subunit beta, found in Rickettsia canadensis (strain McKiel).